Here is a 396-residue protein sequence, read N- to C-terminus: MAKAKFERTKPHVNIGTIGHVDHGKTTTTAAITKVLADAYPELNEAFAFDAIDKAPEEKERGITINISHVEYQTEKRHYAHVDAPGHADYIKNMITGAAQMDGAILVVAATDGPMPQTREHVLLARQVGVPYILVALNKCDMVDDEEIIELVEMEIRELLAEQDYDEEAPIIHISALKALEGDEKWTQSIIDLMQACDDSIPDPERETDKPFLMPIEDIFTITGRGTVVTGRVERGSLKVNEDVEIIGIREKATTTTVTGIEMFRKLLDYTEAGDNCGLLLRGVKREDVERGQVVVKPGAYTPHTEFEGSVYVLSKDEGGRHTPFFDNYRPQFYFRTTDVTGVVKLPEGTEMVMPGDNVDMSVTLIQPVAMDEGLRFAIREGSRTVGAGRVTKIIK.

One can recognise a tr-type G domain in the interval 10–205 (KPHVNIGTIG…ACDDSIPDPE (196 aa)). The G1 stretch occupies residues 19-26 (GHVDHGKT). GTP is bound at residue 19-26 (GHVDHGKT). Mg(2+) is bound at residue T26. The interval 62–66 (GITIN) is G2. Residues 83–86 (DAPG) form a G3 region. GTP-binding positions include 83–87 (DAPGH) and 138–141 (NKCD). A G4 region spans residues 138-141 (NKCD). A G5 region spans residues 175-177 (SAL).

It belongs to the TRAFAC class translation factor GTPase superfamily. Classic translation factor GTPase family. EF-Tu/EF-1A subfamily. In terms of assembly, monomer.

Its subcellular location is the cytoplasm. It catalyses the reaction GTP + H2O = GDP + phosphate + H(+). Functionally, GTP hydrolase that promotes the GTP-dependent binding of aminoacyl-tRNA to the A-site of ribosomes during protein biosynthesis. The sequence is that of Elongation factor Tu from Corynebacterium diphtheriae (strain ATCC 700971 / NCTC 13129 / Biotype gravis).